A 602-amino-acid polypeptide reads, in one-letter code: Aspartate--tRNA(Asp/Asn) ligase (602 aa).

Glu175 is an L-aspartate binding site. Residues 199-202 (QIFK) are aspartate. An L-aspartate-binding site is contributed by Arg221. Residues 221–223 (RDE) and Gln230 contribute to the ATP site. His458 serves as a coordination point for L-aspartate. An ATP-binding site is contributed by Glu492. Arg499 serves as a coordination point for L-aspartate. 544–547 (GLDR) provides a ligand contact to ATP.

The protein belongs to the class-II aminoacyl-tRNA synthetase family. Type 1 subfamily. Homodimer.

The protein resides in the cytoplasm. It catalyses the reaction tRNA(Asx) + L-aspartate + ATP = L-aspartyl-tRNA(Asx) + AMP + diphosphate. Its function is as follows. Aspartyl-tRNA synthetase with relaxed tRNA specificity since it is able to aspartylate not only its cognate tRNA(Asp) but also tRNA(Asn). Reaction proceeds in two steps: L-aspartate is first activated by ATP to form Asp-AMP and then transferred to the acceptor end of tRNA(Asp/Asn). The polypeptide is Aspartate--tRNA(Asp/Asn) ligase (Cupriavidus taiwanensis (strain DSM 17343 / BCRC 17206 / CCUG 44338 / CIP 107171 / LMG 19424 / R1) (Ralstonia taiwanensis (strain LMG 19424))).